Consider the following 83-residue polypeptide: Large ribosomal subunit protein bL31B (83 aa).

This sequence belongs to the bacterial ribosomal protein bL31 family. Type B subfamily. In terms of assembly, part of the 50S ribosomal subunit.

The protein is Large ribosomal subunit protein bL31B of Lactobacillus gasseri (strain ATCC 33323 / DSM 20243 / BCRC 14619 / CIP 102991 / JCM 1131 / KCTC 3163 / NCIMB 11718 / NCTC 13722 / AM63).